We begin with the raw amino-acid sequence, 164 residues long: MRCPKCNYNKSSVVDSRQAEDGNTIRRRRECESCHTRFTTFERLEELPLLVIKKDGTREQFSRDKILNGVVQSAQKRPVSSTDIENLISRIEQKVRTAYENEVSSTVIGNLVMEELAELDEITYVRFASVYKSFKDLDEIEELLQQITNRVRGKKKSSVDDEAY.

A zinc finger spans residues 3–34; it reads CPKCNYNKSSVVDSRQAEDGNTIRRRRECESC. In terms of domain architecture, ATP-cone spans 49–139; it reads LLVIKKDGTR…VYKSFKDLDE (91 aa).

It belongs to the NrdR family. Requires Zn(2+) as cofactor.

Its function is as follows. Negatively regulates transcription of bacterial ribonucleotide reductase nrd genes and operons by binding to NrdR-boxes. The polypeptide is Transcriptional repressor NrdR (Streptococcus equi subsp. zooepidemicus (strain H70)).